The sequence spans 383 residues: Chromatin structure-remodeling complex subunit SFH1 (383 aa).

The interval 61–80 (DDDEKVHSDNGKGEGEEVGH) is disordered. The segment covering 64 to 80 (EKVHSDNGKGEGEEVGH) has biased composition (basic and acidic residues).

This sequence belongs to the SNF5 family.

The protein resides in the nucleus. Its function is as follows. Part of the chromatin structure-remodeling complex (RSC) which is involved in transcription regulation and nucleosome positioning. RSC is responsible for the transfer of a histone octamer from a nucleosome core particle to naked DNA. The reaction requires ATP and involves an activated RSC-nucleosome intermediate. Remodeling reaction also involves DNA translocation, DNA twist and conformational change. As a reconfigurer of centromeric and flanking nucleosomes, RSC complex is required both for proper kinetochore function in chromosome segregation and, via a PKC1-dependent signaling pathway, for organization of the cellular cytoskeleton. This subunit is essential for mitotic growth and required for cell cycle progression. The chain is Chromatin structure-remodeling complex subunit SFH1 (SFH1) from Eremothecium gossypii (strain ATCC 10895 / CBS 109.51 / FGSC 9923 / NRRL Y-1056) (Yeast).